Consider the following 232-residue polypeptide: Orotidine 5'-phosphate decarboxylase (232 aa).

Substrate is bound by residues aspartate 13, lysine 35, 62–71, threonine 122, arginine 182, glutamine 191, glycine 211, and arginine 212; that span reads DLKFHDIPNT. Catalysis depends on lysine 64, which acts as the Proton donor.

The protein belongs to the OMP decarboxylase family. Type 1 subfamily. Homodimer.

The catalysed reaction is orotidine 5'-phosphate + H(+) = UMP + CO2. The protein operates within pyrimidine metabolism; UMP biosynthesis via de novo pathway; UMP from orotate: step 2/2. Its function is as follows. Catalyzes the decarboxylation of orotidine 5'-monophosphate (OMP) to uridine 5'-monophosphate (UMP). The chain is Orotidine 5'-phosphate decarboxylase from Pseudomonas savastanoi pv. phaseolicola (strain 1448A / Race 6) (Pseudomonas syringae pv. phaseolicola (strain 1448A / Race 6)).